The sequence spans 101 residues: Protein mes1 (101 aa).

The span at 1–19 (MVNTDNKENEPPNMEKAHM) shows a compositional bias: basic and acidic residues. Residues 1–101 (MVNTDNKENE…RSPNPLLSMR (101 aa)) form a disordered region.

Interacts with slp1.

It localises to the cytoplasm. Its subcellular location is the nucleus. Its function is as follows. Specifically required for meiosis II (MII). Binds to slp1, an activator of the anapahase promoting complex/cyclcosome (APC/C), and counteracts its function in promoting proteolysis of cdc13. By suppressing the degradation of cdc13 at anaphase I this protein may help maintain a sufficient level of cdc2 kinase activity to complete MII. This Schizosaccharomyces pombe (strain 972 / ATCC 24843) (Fission yeast) protein is Protein mes1 (mes1).